We begin with the raw amino-acid sequence, 119 residues long: Beta-2-microglobulin (119 aa).

An N-terminal signal peptide occupies residues 1-20 (MASSVVVALLVLLSLSGLEA). Residues 25-114 (PKIQVYSRHP…VTFSTPKTVK (90 aa)) form the Ig-like C1-type domain. An intrachain disulfide couples cysteine 45 to cysteine 100.

Belongs to the beta-2-microglobulin family. Heterodimer of an alpha chain and a beta chain. Beta-2-microglobulin is the beta-chain of major histocompatibility complex class I molecules.

It localises to the secreted. Functionally, component of the class I major histocompatibility complex (MHC). Involved in the presentation of peptide antigens to the immune system. The polypeptide is Beta-2-microglobulin (B2M) (Callithrix aurita (White-eared marmoset)).